The primary structure comprises 515 residues: Sugar transport protein MST4 (515 aa).

Over 1-17 (MAGGFSVSGSGVEFEAK) the chain is Cytoplasmic. A helical membrane pass occupies residues 18 to 38 (ITPIVIISCIMAATGGLMFGY). Residues 39 to 78 (DVGISGGVTSMDDFLREFFPTVLKKKHEDKESNYCKYDNQ) are Extracellular-facing. Residues 79-99 (GLQLFTSSLYLAGLTATFFAS) form a helical membrane-spanning segment. Topologically, residues 100–108 (YTTRRLGRR) are cytoplasmic. A helical membrane pass occupies residues 109 to 129 (LTMLIAGVFFIVGVIFNGAAQ). Residues 130-138 (NLAMLIVGR) lie on the Extracellular side of the membrane. The chain crosses the membrane as a helical span at residues 139-159 (ILLGCGVGFANQAVPLFLSEI). The Cytoplasmic portion of the chain corresponds to 160-165 (APTRIR). A helical transmembrane segment spans residues 166–186 (GGLNILFQLNVTIGILFANLV). The Extracellular segment spans residues 187 to 199 (NYGTAKIHPWGWR). Residues 200-220 (LSLSLAGIPAALLTLGALFVV) form a helical membrane-spanning segment. Over 221-280 (DTPNSLIERGRLEEGKAVLRKIRGTDNVEPEFNEIVEASRVAQEVKHPFRNLLQRRNRPQ) the chain is Cytoplasmic. Residues 281-301 (LVIAVLLQIFQQFTGINAIMF) traverse the membrane as a helical segment. Over 302–315 (YAPVLFNTLGFKTD) the chain is Extracellular. Residues 316-336 (ASLYSAVITGAVNVLSTLVSV) form a helical membrane-spanning segment. At 337–347 (YSVDRVGRRML) the chain is on the cytoplasmic side. Residues 348–368 (LLEAGVQMFLSQVAIAVVLGI) form a helical membrane-spanning segment. The Extracellular segment spans residues 369 to 379 (KVTDRSDNLGH). The helical transmembrane segment at 380–400 (GWAIMVVVMVCTFVSSFAWSW) threads the bilayer. Residues 401–422 (GPLGWLIPSETFPLETRSAGQS) are Cytoplasmic-facing. The chain crosses the membrane as a helical span at residues 423–443 (VTVCVNLLFTFVIAQAFLSML). Topologically, residues 444 to 448 (CHLKY) are extracellular. Residues 449-469 (AIFAFFSAWVVVMSLFVLFFL) traverse the membrane as a helical segment. The Cytoplasmic segment spans residues 470 to 515 (PETKNIPIEEMTERVWKQHWFWKRFMDDADKHHVVPNGGKSNGATV).

Belongs to the major facilitator superfamily. Sugar transporter (TC 2.A.1.1) family. In terms of tissue distribution, expressed in roots, shoots, leaf blades, leaf sheaths, anthers, ovaries and embryos.

It is found in the membrane. Its function is as follows. Mediates active uptake of hexoses by sugar:proton symport. Can transport glucose, fructose, mannose and galactose. Can transport xylose and ribose. The protein is Sugar transport protein MST4 of Oryza sativa subsp. japonica (Rice).